We begin with the raw amino-acid sequence, 465 residues long: Tapasin (465 aa).

The first 23 residues, 1 to 23 (MKPLLLLVAVALGLATVVSVVSA), serve as a signal peptide directing secretion. Over 24–416 (GPEAIECWFV…GFSGPSIEDG (393 aa)) the chain is Lumenal. Cys30 and Cys94 form a disulfide bridge. Asn256 carries an N-linked (GlcNAc...) asparagine glycan. The 108-residue stretch at 295 to 402 (PRVSLTPAPV…PASGRSADVT (108 aa)) folds into the Ig-like C1-type domain. A disulfide bridge connects residues Cys318 and Cys385. Residues 417-437 (IGLFLSAFLLLGLLKVLGWLA) traverse the membrane as a helical segment. The Cytoplasmic segment spans residues 438 to 465 (AYWTIPEVSKEKATAASLTIPRNSKKSQ).

As to quaternary structure, heterodimer with PDIA3; disulfide-linked. Obligatory mediator for the interaction between newly assembled MHC class I molecules, calreticulin, PDIA3 and TAP. Up to 4 MHC class I/tapasin complexes bind to 1 TAP. Interacts with HLA-G-B2M complex; this interaction is required for loading of high affinity peptides. On its own or as part of MHC class I peptide loading complex, interacts with ligand-free MR1 or MR1-B2M complex, providing for stable MR1 pools ready for metabolite antigen processing.

The protein localises to the endoplasmic reticulum membrane. Its function is as follows. Involved in the association of MHC class I with transporter associated with antigen processing (TAP) and in the assembly of MHC class I with peptide (peptide loading). The chain is Tapasin (Tapbp) from Mus musculus (Mouse).